Reading from the N-terminus, the 373-residue chain is Aminomethyltransferase (373 aa).

It belongs to the GcvT family. As to quaternary structure, the glycine cleavage system is composed of four proteins: P, T, L and H.

The enzyme catalyses N(6)-[(R)-S(8)-aminomethyldihydrolipoyl]-L-lysyl-[protein] + (6S)-5,6,7,8-tetrahydrofolate = N(6)-[(R)-dihydrolipoyl]-L-lysyl-[protein] + (6R)-5,10-methylene-5,6,7,8-tetrahydrofolate + NH4(+). The glycine cleavage system catalyzes the degradation of glycine. The polypeptide is Aminomethyltransferase (Prochlorococcus marinus (strain SARG / CCMP1375 / SS120)).